We begin with the raw amino-acid sequence, 110 residues long: Large ribosomal subunit protein uL22 (110 aa).

It belongs to the universal ribosomal protein uL22 family. As to quaternary structure, part of the 50S ribosomal subunit.

This protein binds specifically to 23S rRNA; its binding is stimulated by other ribosomal proteins, e.g. L4, L17, and L20. It is important during the early stages of 50S assembly. It makes multiple contacts with different domains of the 23S rRNA in the assembled 50S subunit and ribosome. In terms of biological role, the globular domain of the protein is located near the polypeptide exit tunnel on the outside of the subunit, while an extended beta-hairpin is found that lines the wall of the exit tunnel in the center of the 70S ribosome. The chain is Large ribosomal subunit protein uL22 from Mannheimia succiniciproducens (strain KCTC 0769BP / MBEL55E).